The chain runs to 78 residues: COP9 signalosome complex subunit 5b (78 aa).

This sequence belongs to the peptidase M67A family. CSN5 subfamily. Component of the CSN complex, probably composed of CSN1, CSN2, CSN3, CSN4, CSN5 (CSN5A or CSN5B), CSN6 (CSN6A or CSN6B), CSN7 and CSN8. A divalent metal cation serves as cofactor.

It is found in the cytoplasm. The protein resides in the nucleus. Probable protease subunit of the COP9 signalosome complex (CSN), a complex involved in various cellular and developmental processes such as photomorphogenesis and auxin and jasmonate responses. The CSN complex is an essential regulator of the ubiquitin (Ubl) conjugation pathway by mediating the deneddylation of the cullin subunits of the SCF-type E3 ligase complexes, leading to decrease the Ubl ligase activity of SCF. In the complex, it probably acts as the catalytic center that mediates the cleavage of Nedd8 from cullins. It however has no metalloprotease activity by itself and requires the other subunits of the CSN complex. The CSN complex is involved in repression of photomorphogenesis in darkness by regulating the activity of COP1-containing Ubl ligase complexes. The chain is COP9 signalosome complex subunit 5b (CSN5B) from Brassica oleracea (Wild cabbage).